Here is a 450-residue protein sequence, read N- to C-terminus: Phosphoglucosamine mutase (450 aa).

The Phosphoserine intermediate role is filled by S101. Residues S101, D240, D242, and D244 each contribute to the Mg(2+) site. At S101 the chain carries Phosphoserine.

This sequence belongs to the phosphohexose mutase family. It depends on Mg(2+) as a cofactor. Activated by phosphorylation.

It catalyses the reaction alpha-D-glucosamine 1-phosphate = D-glucosamine 6-phosphate. In terms of biological role, catalyzes the conversion of glucosamine-6-phosphate to glucosamine-1-phosphate. The protein is Phosphoglucosamine mutase of Streptococcus equi subsp. zooepidemicus (strain MGCS10565).